The chain runs to 156 residues: ATP synthase subunit b (156 aa).

Residues 7–26 traverse the membrane as a helical segment; that stretch reads LIGQAIWFALFIWITMKYVW.

Belongs to the ATPase B chain family. As to quaternary structure, F-type ATPases have 2 components, F(1) - the catalytic core - and F(0) - the membrane proton channel. F(1) has five subunits: alpha(3), beta(3), gamma(1), delta(1), epsilon(1). F(0) has three main subunits: a(1), b(2) and c(10-14). The alpha and beta chains form an alternating ring which encloses part of the gamma chain. F(1) is attached to F(0) by a central stalk formed by the gamma and epsilon chains, while a peripheral stalk is formed by the delta and b chains.

Its subcellular location is the cell inner membrane. In terms of biological role, f(1)F(0) ATP synthase produces ATP from ADP in the presence of a proton or sodium gradient. F-type ATPases consist of two structural domains, F(1) containing the extramembraneous catalytic core and F(0) containing the membrane proton channel, linked together by a central stalk and a peripheral stalk. During catalysis, ATP synthesis in the catalytic domain of F(1) is coupled via a rotary mechanism of the central stalk subunits to proton translocation. Component of the F(0) channel, it forms part of the peripheral stalk, linking F(1) to F(0). The sequence is that of ATP synthase subunit b from Dechloromonas aromatica (strain RCB).